The following is a 366-amino-acid chain: Anhydro-N-acetylmuramic acid kinase (366 aa).

10–17 (GTSMDGID) lines the ATP pocket.

Belongs to the anhydro-N-acetylmuramic acid kinase family.

The enzyme catalyses 1,6-anhydro-N-acetyl-beta-muramate + ATP + H2O = N-acetyl-D-muramate 6-phosphate + ADP + H(+). It participates in amino-sugar metabolism; 1,6-anhydro-N-acetylmuramate degradation. Its pathway is cell wall biogenesis; peptidoglycan recycling. Its function is as follows. Catalyzes the specific phosphorylation of 1,6-anhydro-N-acetylmuramic acid (anhMurNAc) with the simultaneous cleavage of the 1,6-anhydro ring, generating MurNAc-6-P. Is required for the utilization of anhMurNAc either imported from the medium or derived from its own cell wall murein, and thus plays a role in cell wall recycling. The chain is Anhydro-N-acetylmuramic acid kinase from Legionella pneumophila (strain Paris).